The following is a 154-amino-acid chain: Ribonuclease H (154 aa).

One can recognise an RNase H type-1 domain in the interval 1 to 142; the sequence is MTKQVEIFTD…CDELARQGAN (142 aa). Residues Asp-10, Glu-48, Asp-70, and Asp-134 each coordinate Mg(2+).

It belongs to the RNase H family. As to quaternary structure, monomer. Requires Mg(2+) as cofactor.

Its subcellular location is the cytoplasm. The enzyme catalyses Endonucleolytic cleavage to 5'-phosphomonoester.. Endonuclease that specifically degrades the RNA of RNA-DNA hybrids. This Yersinia pestis bv. Antiqua (strain Antiqua) protein is Ribonuclease H.